The primary structure comprises 866 residues: Scm-like with four MBT domains protein 1 (866 aa).

MBT repeat units follow at residues 20–120 (LSWE…LEAP), 128–232 (SDWD…LQPP), 242–348 (AEWQ…ISPP), and 356–453 (FDWA…LSTP). An antigenic epitope region spans residues 34-42 (VPYGSFKHV). Positions 641-777 (KKKNKRIGRP…DDENKPPSPK (137 aa)) are disordered. Positions 663-682 (KASKRRKRRKNVFVHKKKRS) are enriched in basic residues. Residues 683 to 694 (SASVDNTPAGSP) are compositionally biased toward polar residues. Acidic residues-rich tracts occupy residues 699-713 (GEDEDDPDEGDDDSL) and 721-730 (QQDELQEESE). Residues 737–749 (CSSSPTQSEISTS) are compositionally biased toward low complexity. A phosphoserine mark is found at Ser-767 and Ser-775. Residues 796-864 (WSVADVVRFI…RIKFAFYEQF (69 aa)) enclose the SAM domain.

In terms of assembly, interacts with MYOD1. Component of the SLC (SFMBT1-LSD1-CoREST) corepressor complex, which also contains KDM1A/LSD1 and RCOR1/CoREST. Interacts with KDM1A/LSD1 and RCOR1/CoREST. Interacts with L3MBTL3. In terms of tissue distribution, expressed in all cell lines and normal tissues tested, including the thymus.

It localises to the nucleus. Histone-binding protein, which is part of various corepressor complexes. Mediates the recruitment of corepressor complexes to target genes, followed by chromatin compaction and repression of transcription. Plays a role during myogenesis: required for the maintenance of undifferentiated states of myogenic progenitor cells via interaction with MYOD1. Interaction with MYOD1 leads to the recruitment of associated corepressors and silencing of MYOD1 target genes. Part of the SLC complex in germ cells, where it may play a role during spermatogenesis. The chain is Scm-like with four MBT domains protein 1 (SFMBT1) from Homo sapiens (Human).